The primary structure comprises 393 residues: MNHSPQSARPVSIMRRFLDSEAAGGITLMAAAALALIVANSPFAQTYFDALHLYIGPLSLAHWINDALMAIFFLLVGLEIKREMLDGQLASWPNRMLPGIAAAGGVILPAIIFAVLNHDNPAKLRGWAVPSATDIAFALGVLSLLGSRAPSSLKVFLATLAILDDLAAVVIIAIFYTAEISMPYLGAAFITAAVLFVMNRMGVVKLLPYLISAVILWFFVFNSGVHATVAGVVAALMIPLKPAPGRPDDMTSPLHKLEHALAKPVAFIVVPIFGFANAGISFKGLEASVLGDTLTLGILLGLFLGKQFGVFGAAWLAIKTGLAEKPMGASWVQLYGVAILCGIGFTMSIFIGLLSFPSDLMQTETKIGVLSGSALSAICGYLLLRAAARPKRG.

The next 12 membrane-spanning stretches (helical) occupy residues 23–43 (AGGI…NSPF), 58–78 (LSLA…LVGL), 96–116 (MLPG…FAVL), 126–146 (GWAV…SLLG), 155–175 (VFLA…IAIF), 178–198 (AEIS…LFVM), 201–221 (MGVV…FFVF), 224–244 (GVHA…KPAP), 265–285 (VAFI…FKGL), 298–318 (ILLG…WLAI), 334–354 (LYGV…IGLL), and 367–387 (IGVL…LRAA).

The protein belongs to the NhaA Na(+)/H(+) (TC 2.A.33) antiporter family.

The protein localises to the cell inner membrane. The enzyme catalyses Na(+)(in) + 2 H(+)(out) = Na(+)(out) + 2 H(+)(in). In terms of biological role, na(+)/H(+) antiporter that extrudes sodium in exchange for external protons. The protein is Na(+)/H(+) antiporter NhaA of Brucella canis (strain ATCC 23365 / NCTC 10854 / RM-666).